A 200-amino-acid chain; its full sequence is MSEYELPPLPYDYDALEPHISEQVLTWHHDTHHQGYVNGWNDAEETLAENRETGDHASTAGALGDVTHNGSGHILHTLFWQSMSPAGGDEPSGALADRIAADFGSYENWRAEFEAAASAASGWALLVYDSHSNTLRNVAVDNHDEGALWGSHPILALDVWEHSYYYDYGPDRGSFVDAFFEVVDWDEPTERFEQAAERFE.

Histidine 29, histidine 76, aspartate 158, and histidine 162 together coordinate Mn(2+).

This sequence belongs to the iron/manganese superoxide dismutase family. As to quaternary structure, homodimer or homotetramer. Mn(2+) serves as cofactor.

It carries out the reaction 2 superoxide + 2 H(+) = H2O2 + O2. With respect to regulation, inhibited by hydrogen peroxide. Is resistant to cyanide and azide inhibition. Its function is as follows. Destroys superoxide anion radicals which are normally produced within the cells and which are toxic to biological systems. The protein is Superoxide dismutase [Mn] 1 (sod1) of Halobacterium salinarum (strain ATCC 700922 / JCM 11081 / NRC-1) (Halobacterium halobium).